A 417-amino-acid polypeptide reads, in one-letter code: NADH-quinone oxidoreductase subunit D (417 aa).

Belongs to the complex I 49 kDa subunit family. As to quaternary structure, NDH-1 is composed of 14 different subunits. Subunits NuoB, C, D, E, F, and G constitute the peripheral sector of the complex.

Its subcellular location is the cell inner membrane. The enzyme catalyses a quinone + NADH + 5 H(+)(in) = a quinol + NAD(+) + 4 H(+)(out). Functionally, NDH-1 shuttles electrons from NADH, via FMN and iron-sulfur (Fe-S) centers, to quinones in the respiratory chain. The immediate electron acceptor for the enzyme in this species is believed to be ubiquinone. Couples the redox reaction to proton translocation (for every two electrons transferred, four hydrogen ions are translocated across the cytoplasmic membrane), and thus conserves the redox energy in a proton gradient. The chain is NADH-quinone oxidoreductase subunit D from Ralstonia pickettii (strain 12J).